The primary structure comprises 1334 residues: Nck-associated protein 5-like (1334 aa).

Disordered regions lie at residues 1 to 28, 115 to 146, 210 to 234, 266 to 316, and 349 to 711; these read MSEAMDQPAGGPGNPRPGEGDDGSMEPG, LPQIPLTPLQPPSEPPASPSLSSTEGPAAPLP, TPWRPPGQGPGSPEPINGELCGPPQ, GEED…SPDT, and PLNG…MVPS. A mediates interaction with CDK5RAP2 and is required for homodimerization and microtubule bundle formation region spans residues 1-139; sequence MSEAMDQPAG…PASPSLSSTE (139 aa). The stretch at 28–106 forms a coiled coil; that stretch reads GTCQELLHRL…NQMLSALFQQ (79 aa). Positions 122–132 are enriched in pro residues; that stretch reads PLQPPSEPPAS. The span at 358 to 372 shows a compositional bias: polar residues; that stretch reads GQSSSPDQAPPQLSK. Phosphoserine; by CDK1 is present on residues Ser-440, Ser-451, Ser-470, and Ser-477. Over residues 468–481 the composition is skewed to low complexity; sequence SPSPGGPQLSPQLP. A (S/T)X(I/L)P motif 1 motif is present at residues 484-487; it reads SRIP. 3 positions are modified to phosphoserine: Ser-493, Ser-496, and Ser-498. Residues 519–547 show a composition bias toward polar residues; that stretch reads LPTSPSPCYTTPDSTQLRPPQSALSTTLS. Phosphoserine; by CDK1 occurs at positions 571 and 577. The span at 638-649 shows a compositional bias: polar residues; that stretch reads PGNSSKKPSQGS. Position 659 is a phosphothreonine (Thr-659). A mediates interaction with beta-tubulin and is required for microtubule bundle formation region spans residues 750–1146; the sequence is RVYSSHSMGA…SGTPSKNLPK (397 aa). The residue at position 767 (Ser-767) is a Phosphoserine; by CDK1. Residues 782–884 form a disordered region; that stretch reads LAGALCPQVP…EGLAPHSAIE (103 aa). Over residues 810–825 the composition is skewed to low complexity; it reads SPHSSPTKLPSKSPTK. The short motif at 816 to 819 is the (S/T)X(I/L)P motif 2 element; the sequence is TKLP. The short motif at 926–929 is the (S/T)X(I/L)P motif 3; required for interaction with MAPRE1 element; that stretch reads SKLP. Disordered stretches follow at residues 931 to 953, 986 to 1015, and 1030 to 1183; these read LNRRTEATKNKEGAGGGSPLRRE, KAYLSSRARPRPGGPAPGPNTGLGQVQGQL, and LNRV…VPGI. Residues 933-942 are compositionally biased toward basic and acidic residues; the sequence is RRTEATKNKE. The stretch at 956 to 994 forms a coiled coil; that stretch reads MEARKLEAESLNISKLMAKAEDLRRALEEEKAYLSSRAR. Residues 1033–1050 are compositionally biased toward basic and acidic residues; the sequence is VDGKELPSKSWREPKPEY. The segment covering 1079 to 1090 has biased composition (low complexity); that stretch reads GCGKPPGKPSSE. Over residues 1110-1122 the composition is skewed to polar residues; that stretch reads SHFTACGSLTRTL. Positions 1152–1167 are enriched in pro residues; sequence LDPPPGVPPARPPPLT. Ser-1194 carries the phosphoserine modification. Over residues 1197-1206 the composition is skewed to low complexity; sequence AFPALLPAAP. Residues 1197 to 1334 are disordered; that stretch reads AFPALLPAAP…DSLSSCGSQG (138 aa). A compositionally biased stretch (polar residues) spans 1235-1247; the sequence is TFPNTRAAGSSSD. Positions 1313-1334 are enriched in low complexity; sequence LETSESLSDSLYDSLSSCGSQG.

In terms of assembly, homodimer. Interacts with CDK5RAP2. Interacts with MAPRE1. Interacts with beta-tubulin. In terms of processing, CDK1/Cyclin B-dependent phosphorylation mediates its dissociation from centrosomes during mitosis.

The protein localises to the cytoplasm. Its subcellular location is the cytoskeleton. It is found in the microtubule organizing center. It localises to the centrosome. Functionally, regulates microtubule organization and stabilization. Promotes microtubule growth and bundling formation and stabilizes microtubules by increasing intense acetylation of microtubules. Both tubulin-binding and homodimer formation are required for NCKAP5L-mediated microtubule bundle formation. The protein is Nck-associated protein 5-like of Homo sapiens (Human).